Reading from the N-terminus, the 652-residue chain is Thioredoxin reductase 3 (652 aa).

The segment covering methionine 1–arginine 12 has biased composition (pro residues). The tract at residues methionine 1–glutamate 62 is disordered. Arginine 34 is subject to Asymmetric dimethylarginine; alternate. Arginine 34 bears the Omega-N-methylarginine; alternate mark. The residue at position 50 (serine 50) is a Phosphoserine. The Glutaredoxin domain occupies arginine 65 to aspartate 165. An FAD-binding site is contributed by aspartate 167–phenylalanine 196. Cysteine 212 and cysteine 217 are oxidised to a cystine. An N6-succinyllysine modification is found at lysine 388. Histidine 625 serves as the catalytic Proton acceptor. Positions cysteine 650 to selenocysteine 651 form a cross-link, cysteinyl-selenocysteine (Cys-Sec). Selenocysteine 651 is a non-standard amino acid (selenocysteine).

Belongs to the class-I pyridine nucleotide-disulfide oxidoreductase family. As to quaternary structure, homodimer. FAD serves as cofactor. As to expression, expressed preferentially in testis where it is found in spermatids and spermatocytes but not in sperm. In elongating spermatids, expressed at the site of mitochondrial sheath formation. Low levels in other tissues including heart, lung, liver, kidney, brain, muscle and prostate.

It localises to the cytoplasm. It is found in the nucleus. The protein localises to the microsome. Its subcellular location is the endoplasmic reticulum. The catalysed reaction is [thioredoxin]-dithiol + NADP(+) = [thioredoxin]-disulfide + NADPH + H(+). In terms of biological role, displays thioredoxin reductase, glutaredoxin and glutathione reductase activities. Catalyzes disulfide bond isomerization. Promotes disulfide bond formation between GPX4 and various sperm proteins and may play a role in sperm maturation by promoting formation of sperm structural components. The chain is Thioredoxin reductase 3 from Mus musculus (Mouse).